Here is a 572-residue protein sequence, read N- to C-terminus: Urease subunit alpha (572 aa).

Positions 136-572 (GGIDTHIHWI…VPLAQRYFLF (437 aa)) constitute a Urease domain. Ni(2+)-binding residues include H141, H143, and K224. The residue at position 224 (K224) is an N6-carboxylysine. Position 226 (H226) interacts with substrate. Ni(2+) is bound by residues H253 and H279. H327 serves as the catalytic Proton donor. D367 provides a ligand contact to Ni(2+).

It belongs to the metallo-dependent hydrolases superfamily. Urease alpha subunit family. In terms of assembly, heterotrimer of UreA (gamma), UreB (beta) and UreC (alpha) subunits. Three heterotrimers associate to form the active enzyme. It depends on Ni cation as a cofactor. Carboxylation allows a single lysine to coordinate two nickel ions.

It is found in the cytoplasm. It carries out the reaction urea + 2 H2O + H(+) = hydrogencarbonate + 2 NH4(+). Its pathway is nitrogen metabolism; urea degradation; CO(2) and NH(3) from urea (urease route): step 1/1. The sequence is that of Urease subunit alpha from Actinobacillus pleuropneumoniae serotype 7 (strain AP76).